The following is a 237-amino-acid chain: Eukaryotic translation initiation factor 4E-1 (237 aa).

A disordered region spans residues 1–61; the sequence is MVVEDTQKSV…KPPAALARNP (61 aa). Acidic residues predominate over residues 25–44; that stretch reads NNDDDDDDLEEGEIPVDGED. Residues 47 to 58 are compositionally biased toward low complexity; that stretch reads ATATTKPPAALA. EIF4G-binding stretches follow at residues 62–65 and 72–108; these read HPLE and FDNP…NNIH. MRNA-binding positions include 80–85, lysine 112, and 130–131; these read KQAAWG and WE. The cysteines at positions 135 and 173 are disulfide-linked. The interval 156 to 165 is EIF4G-binding; it reads YTLLAMIGEQ. MRNA is bound by residues 180-185 and 225-229; these read RSRQDK and KKLDR.

This sequence belongs to the eukaryotic initiation factor 4E family. In terms of assembly, EIF4F is a multi-subunit complex, the composition of which varies with external and internal environmental conditions. It is composed of at least EIF4A, EIF4E and EIF4G. EIF4E is also known to interact with other partners. In higher plants two isoforms of EIF4F have been identified, named isoform EIF4F and isoform EIF(iso)4F. Isoform EIF4F has subunits p220 and p26, whereas isoform EIF(iso)4F has subunits p82 and p28. (Microbial infection) Interacts with potyvirus viral genome-linked protein (VPg) in the nucleus; this interaction is possible in susceptible hosts but is impaired in resistant plants. Binds to soybean mosaic virus (SMV) VPg in the nucleus. Interacts with SMV nuclear inclusion protein A (NIa-Pro) and nuclear inclusion protein B (NIb) in the cytoplasm. In terms of processing, according to the redox status, the Cys-135-Cys-173 disulfide bridge may have a role in regulating protein function by affecting its ability to bind capped mRNA. As to expression, mostly expressed in roots, flowers, immature pods and mature seeds, and, to a lower extent, in stems and leaves.

The protein localises to the nucleus. It is found in the cytoplasm. In terms of biological role, component of the protein complex eIF4F, which is involved in the recognition of the mRNA cap, ATP-dependent unwinding of 5'-terminal secondary structure and recruitment of mRNA to the ribosome. Recognizes and binds the 7-methylguanosine-containing mRNA cap during an early step in the initiation of protein synthesis and facilitates ribosome binding by inducing the unwinding of the mRNAs secondary structures. Key component of recessive resistance to potyviruses (e.g. soybean mosaic virus (SMV), bean common mosaic virus (BCMV) and watermelon mosaic virus (WMV), but not bean pod mottle virus (BPMV)). Its function is as follows. (Microbial infection) Susceptibility host factor required for viral infection by recruiting viral RNAs to the host ribosomal complex via an interaction with viral genome-linked protein (VPg). The polypeptide is Eukaryotic translation initiation factor 4E-1 (Glycine max (Soybean)).